We begin with the raw amino-acid sequence, 241 residues long: Biosynthetic peptidoglycan transglycosylase (241 aa).

Residues 18–38 (GVIGIIALWMAGILIFAFLPV) form a helical membrane-spanning segment.

It belongs to the glycosyltransferase 51 family.

The protein localises to the cell inner membrane. The catalysed reaction is [GlcNAc-(1-&gt;4)-Mur2Ac(oyl-L-Ala-gamma-D-Glu-L-Lys-D-Ala-D-Ala)](n)-di-trans,octa-cis-undecaprenyl diphosphate + beta-D-GlcNAc-(1-&gt;4)-Mur2Ac(oyl-L-Ala-gamma-D-Glu-L-Lys-D-Ala-D-Ala)-di-trans,octa-cis-undecaprenyl diphosphate = [GlcNAc-(1-&gt;4)-Mur2Ac(oyl-L-Ala-gamma-D-Glu-L-Lys-D-Ala-D-Ala)](n+1)-di-trans,octa-cis-undecaprenyl diphosphate + di-trans,octa-cis-undecaprenyl diphosphate + H(+). It participates in cell wall biogenesis; peptidoglycan biosynthesis. In terms of biological role, peptidoglycan polymerase that catalyzes glycan chain elongation from lipid-linked precursors. This chain is Biosynthetic peptidoglycan transglycosylase, found in Yersinia pseudotuberculosis serotype O:3 (strain YPIII).